A 286-amino-acid polypeptide reads, in one-letter code: 4-hydroxybenzoate octaprenyltransferase (286 aa).

7 helical membrane-spanning segments follow: residues 21 to 40 (GTLL…AGGM), 95 to 115 (ILFV…NGLV), 142 to 162 (FLGI…TGEV), 167 to 187 (WWLF…YAMV), 210 to 230 (QIIG…GWSA), 235 to 255 (LYGL…MLIF), and 266 to 286 (FLNN…DYLI).

This sequence belongs to the UbiA prenyltransferase family. It depends on Mg(2+) as a cofactor.

It localises to the cell inner membrane. It carries out the reaction all-trans-octaprenyl diphosphate + 4-hydroxybenzoate = 4-hydroxy-3-(all-trans-octaprenyl)benzoate + diphosphate. It functions in the pathway cofactor biosynthesis; ubiquinone biosynthesis. Catalyzes the prenylation of para-hydroxybenzoate (PHB) with an all-trans polyprenyl group. Mediates the second step in the final reaction sequence of ubiquinone-8 (UQ-8) biosynthesis, which is the condensation of the polyisoprenoid side chain with PHB, generating the first membrane-bound Q intermediate 3-octaprenyl-4-hydroxybenzoate. This Shewanella baltica (strain OS223) protein is 4-hydroxybenzoate octaprenyltransferase.